Here is a 158-residue protein sequence, read N- to C-terminus: uncharacterized protein (158 aa).

The tract at residues 1–26 is disordered; sequence MRASRSPPSPRRCHHHHEATGAASGA.

This is an uncharacterized protein from Homo sapiens (Human).